Here is a 97-residue protein sequence, read N- to C-terminus: uncharacterized protein (97 aa).

The 94-residue stretch at I2–Y95 folds into the Stress-response A/B barrel domain.

This is an uncharacterized protein from Streptomyces coelicolor (strain ATCC BAA-471 / A3(2) / M145).